The sequence spans 240 residues: Urease accessory protein UreF (240 aa).

This sequence belongs to the UreF family. In terms of assembly, ureD, UreF and UreG form a complex that acts as a GTP-hydrolysis-dependent molecular chaperone, activating the urease apoprotein by helping to assemble the nickel containing metallocenter of UreC. The UreE protein probably delivers the nickel.

It is found in the cytoplasm. Its function is as follows. Required for maturation of urease via the functional incorporation of the urease nickel metallocenter. This is Urease accessory protein UreF from Rhodopseudomonas palustris (strain TIE-1).